We begin with the raw amino-acid sequence, 42 residues long: Small, acid-soluble spore protein L (42 aa).

The interval 1–42 (MKKKDKGRLTGGVTPQGDLEGNTHNDPKTELEERAKKSNTKR) is disordered. The span at 21-36 (GNTHNDPKTELEERAK) shows a compositional bias: basic and acidic residues.

It is found in the spore core. The protein is Small, acid-soluble spore protein L (sspL) of Bacillus subtilis (strain 168).